A 231-amino-acid chain; its full sequence is Uracil phosphoribosyltransferase (231 aa).

38–42 (KGLVR) contributes to the GTP binding site. 5-phospho-alpha-D-ribose 1-diphosphate-binding positions include Arg87, Arg112, and 140 to 148 (DPMIATGST). Uracil contacts are provided by residues Ile203 and 208–210 (GDA). Asp209 is a binding site for 5-phospho-alpha-D-ribose 1-diphosphate.

This sequence belongs to the UPRTase family. The cofactor is Mg(2+).

It catalyses the reaction UMP + diphosphate = 5-phospho-alpha-D-ribose 1-diphosphate + uracil. It participates in pyrimidine metabolism; UMP biosynthesis via salvage pathway; UMP from uracil: step 1/1. Allosterically activated by GTP. In terms of biological role, catalyzes the conversion of uracil and 5-phospho-alpha-D-ribose 1-diphosphate (PRPP) to UMP and diphosphate. In Methanococcus maripaludis (strain C6 / ATCC BAA-1332), this protein is Uracil phosphoribosyltransferase.